We begin with the raw amino-acid sequence, 274 residues long: Shikimate dehydrogenase (NADP(+)) (274 aa).

Shikimate contacts are provided by residues 14–16 (SQS) and threonine 61. The active-site Proton acceptor is the lysine 65. Residues asparagine 86 and aspartate 102 each coordinate shikimate. NADP(+) contacts are provided by residues 128-132 (GAGGA), 151-156 (NRTVEK), and leucine 215. Tyrosine 217 is a binding site for shikimate. Glycine 239 contacts NADP(+).

Belongs to the shikimate dehydrogenase family. In terms of assembly, homodimer.

It catalyses the reaction shikimate + NADP(+) = 3-dehydroshikimate + NADPH + H(+). The protein operates within metabolic intermediate biosynthesis; chorismate biosynthesis; chorismate from D-erythrose 4-phosphate and phosphoenolpyruvate: step 4/7. Functionally, involved in the biosynthesis of the chorismate, which leads to the biosynthesis of aromatic amino acids. Catalyzes the reversible NADPH linked reduction of 3-dehydroshikimate (DHSA) to yield shikimate (SA). The protein is Shikimate dehydrogenase (NADP(+)) of Proteus mirabilis (strain HI4320).